The primary structure comprises 279 residues: Energy-coupling factor transporter ATP-binding protein EcfA1 (279 aa).

An ABC transporter domain is found at 5 to 240; sequence IELNNIQFNY…GEALVEMGLD (236 aa). An ATP-binding site is contributed by 40 to 47; sequence GHNGSGKS.

This sequence belongs to the ABC transporter superfamily. Energy-coupling factor EcfA family. Forms a stable energy-coupling factor (ECF) transporter complex composed of 2 membrane-embedded substrate-binding proteins (S component), 2 ATP-binding proteins (A component) and 2 transmembrane proteins (T component).

Its subcellular location is the cell membrane. ATP-binding (A) component of a common energy-coupling factor (ECF) ABC-transporter complex. Unlike classic ABC transporters this ECF transporter provides the energy necessary to transport a number of different substrates. The protein is Energy-coupling factor transporter ATP-binding protein EcfA1 of Enterococcus faecalis (strain ATCC 700802 / V583).